A 410-amino-acid polypeptide reads, in one-letter code: MVLSQRQRDELNRAIADYLRSNGYEEAYSVFKKEAELDMNEELDKKYAGLLEKKWTSVIRLQKKVMELESKLNEAKEEINIGGPIGQKRDPKEWIPRPPEKYALSGHRSPVTRVIFHPVFSVIVSASEDATIKVWDHETGDFERTLKGHTDSVQDISFDHTGKLLASCSADMTIKLWDFQGFECIRTMHGHDHNVSSVAIMPNGDHIVSASRDKTIKMWEVATGYCVKTFTGHREWVRMVRPNQDGTLIASSSNDQTVRVWVVATKECKAELREHEHVVECISWAPESAHPTILEATGSETKKSGKPGPFLLSGSRDKTIKMWDVSIGMCLMTLVGHDNWVRGVLVHPGGKYIVSCADDKTLRIWDYKNKRCTKTLSAHEHFVTSLDFHKTAPYVVTGSVDQTVKVWECR.

The LisH domain maps to 7-39 (QRDELNRAIADYLRSNGYEEAYSVFKKEAELDM). A coiled-coil region spans residues 56-83 (TSVIRLQKKVMELESKLNEAKEEINIGG). WD repeat units lie at residues 106 to 145 (GHRS…FERT), 148 to 187 (GHTD…CIRT), 190 to 229 (GHDH…CVKT), 232 to 271 (GHRE…CKAE), 274 to 333 (EHEH…CLMT), 336 to 375 (GHDN…CTKT), and 378 to 410 (AHEH…WECR).

It belongs to the WD repeat LIS1/nudF family. As to quaternary structure, can self-associate. Component of the cytosolic PAF-AH (I) heterotetrameric enzyme, which is composed of PAFAH1B1 (beta), PAFAH1B2 (alpha2) and PAFAH1B3 (alpha1) subunits. The catalytic activity of the enzyme resides in the alpha1 (PAFAH1B3) and alpha2 (PAFAH1B2) subunits, whereas the beta subunit (PAFAH1B1) has regulatory activity. Trimer formation is not essential for the catalytic activity. Interacts with dynein, dynactin, nde1 and ndel1.

It localises to the cytoplasm. It is found in the cytoskeleton. The protein resides in the microtubule organizing center. Its subcellular location is the centrosome. Regulatory subunit (beta subunit) of the cytosolic type I platelet-activating factor (PAF) acetylhydrolase (PAF-AH (I)), an enzyme that catalyzes the hydrolyze of the acetyl group at the sn-2 position of PAF and its analogs and participates in PAF inactivation. Regulates the PAF-AH (I) activity in a catalytic dimer composition-dependent manner. Positively regulates the activity of the minus-end directed microtubule motor protein dynein. May enhance dynein-mediated microtubule sliding by targeting dynein to the microtubule plus end. Required for several dynein- and microtubule-dependent processes such as the maintenance of Golgi integrity, the peripheral transport of microtubule fragments and the coupling of the nucleus and centrosome. May be required for proliferation of neuronal precursors and neuronal migration. The polypeptide is Lissencephaly-1 homolog A (pafah1b1a) (Danio rerio (Zebrafish)).